A 301-amino-acid chain; its full sequence is Acetaldehyde dehydrogenase (301 aa).

Cys130 (acyl-thioester intermediate) is an active-site residue. NAD(+) is bound by residues 161–169 and Asn272; that span reads SVGPGTRRN.

It belongs to the acetaldehyde dehydrogenase family.

The catalysed reaction is acetaldehyde + NAD(+) + CoA = acetyl-CoA + NADH + H(+). The sequence is that of Acetaldehyde dehydrogenase (mhpF) from Cupriavidus taiwanensis (strain DSM 17343 / BCRC 17206 / CCUG 44338 / CIP 107171 / LMG 19424 / R1) (Ralstonia taiwanensis (strain LMG 19424)).